The chain runs to 445 residues: Tubulin beta-3 chain (445 aa).

GTP contacts are provided by Gln-11, Glu-69, Ser-138, Gly-142, Thr-143, Gly-144, Asn-204, and Asn-226. Residue Glu-69 coordinates Mg(2+). The interval 425–445 (YQDATAEEYDEEEQDGEEEHD) is disordered. Acidic residues predominate over residues 429 to 445 (TAEEYDEEEQDGEEEHD).

It belongs to the tubulin family. In terms of assembly, dimer of alpha and beta chains. A typical microtubule is a hollow water-filled tube with an outer diameter of 25 nm and an inner diameter of 15 nM. Alpha-beta heterodimers associate head-to-tail to form protofilaments running lengthwise along the microtubule wall with the beta-tubulin subunit facing the microtubule plus end conferring a structural polarity. Microtubules usually have 13 protofilaments but different protofilament numbers can be found in some organisms and specialized cells. It depends on Mg(2+) as a cofactor.

The protein localises to the cytoplasm. Its subcellular location is the cytoskeleton. Its function is as follows. Tubulin is the major constituent of microtubules, a cylinder consisting of laterally associated linear protofilaments composed of alpha- and beta-tubulin heterodimers. Microtubules grow by the addition of GTP-tubulin dimers to the microtubule end, where a stabilizing cap forms. Below the cap, tubulin dimers are in GDP-bound state, owing to GTPase activity of alpha-tubulin. This Zea mays (Maize) protein is Tubulin beta-3 chain (TUBB3).